The following is a 238-amino-acid chain: MLLLPLLVLLCVVSVSSSGSQTCEETLKTCSVIACGRDGRDGPKGEKGEPGQGLRGLQGPPGKLGPPGSVGAPGSQGPKGQKGDRGDSRAIEVKLANMEAEINTLKSKLELTNKLHAFSMGKKSGKKFFVTNHERMPFSKVKALCSELRGTVAIPRNAEENKAIQEVAKTSAFLGITDEVTEGQFMYVTGGRLTYSNWKKDEPNDHGSGEDCVTIVDNGLWNDISCQASHTAVCEFPA.

Positions 1–17 (MLLLPLLVLLCVVSVSS) are cleaved as a signal peptide. The span at 38–49 (DGRDGPKGEKGE) shows a compositional bias: basic and acidic residues. Residues 38–87 (DGRDGPKGEKGEPGQGLRGLQGPPGKLGPPGSVGAPGSQGPKGQKGDRGD) are disordered. The Collagen-like domain maps to 39–88 (GRDGPKGEKGEPGQGLRGLQGPPGKLGPPGSVGAPGSQGPKGQKGDRGDS). Position 43 is a 4-hydroxyproline (Pro43). 2 positions are modified to 5-hydroxylysine: Lys44 and Lys47. O-linked (Gal...) hydroxylysine glycosylation is found at Lys44 and Lys47. 4-hydroxyproline is present on residues Pro50, Pro61, Pro67, Pro73, and Pro78. A 5-hydroxylysine mark is found at Lys79 and Lys82. O-linked (Gal...) hydroxylysine glycans are attached at residues Lys79 and Lys82. The C-type lectin domain occupies 143–238 (ALCSELRGTV…SHTAVCEFPA (96 aa)). 2 cysteine pairs are disulfide-bonded: Cys145–Cys234 and Cys212–Cys226. Asp178, Glu182, Glu202, Asn204, Asp205, Glu210, Asp211, Asn222, and Asp223 together coordinate Ca(2+). The segment at 202-210 (EPNDHGSGE) is calcium-dependent carbohydrate binding.

As to quaternary structure, homotrimer. Forms higher oligomeric complexes formed by the association of two, three or more homotrimers. Oligomerization occurs in the endoplasmic reticulum. Interacts with MASP1 and MASP2. In terms of processing, hydroxylated on lysine and proline residues within the collagen-like domain. O-glycosylated. O-linked glycans on hydroxylysine residues consist of Glc-Gal disaccharides bound to the oxygen atom of post-translationally added hydroxyl groups. Detected in blood serum (at protein level).

The protein localises to the secreted. Functionally, calcium-dependent lectin. Plays a role in the innate immune response by binding mannose, fucose and N-acetylglucosamine moieties on different microorganisms and mediating activation of the lectin complement pathway. Binds to late apoptotic cells, as well as to apoptotic blebs and to necrotic cells, but not to early apoptotic cells, facilitating their uptake by macrophages. In Rattus norvegicus (Rat), this protein is Mannose-binding protein A (Mbl1).